We begin with the raw amino-acid sequence, 541 residues long: Beta-hexosaminidase subunit A2 (541 aa).

The signal sequence occupies residues 1–21 (MINKFLTIFLIFSIVIIKVLS). Residue Glu-314 is the Proton donor of the active site. Asn-322, Asn-336, Asn-356, Asn-435, and Asn-483 each carry an N-linked (GlcNAc...) asparagine glycan.

This sequence belongs to the glycosyl hydrolase 20 family.

Its subcellular location is the lysosome. The enzyme catalyses Hydrolysis of terminal non-reducing N-acetyl-D-hexosamine residues in N-acetyl-beta-D-hexosaminides.. In terms of biological role, responsible for the degradation of GM2 gangliosides, and a variety of other molecules containing terminal N-acetyl hexosamines. This is Beta-hexosaminidase subunit A2 (hexa2) from Dictyostelium discoideum (Social amoeba).